Consider the following 293-residue polypeptide: Formamidopyrimidine-DNA glycosylase (293 aa).

The active-site Schiff-base intermediate with DNA is proline 2. The active-site Proton donor is the glutamate 3. Lysine 58 (proton donor; for beta-elimination activity) is an active-site residue. Residues histidine 104, arginine 123, and lysine 166 each contribute to the DNA site. The segment at 257 to 293 adopts an FPG-type zinc-finger fold; sequence AVYDREGERCRTPGCNGTVKRLVQNGRSTFWCSGCQT. Arginine 283 acts as the Proton donor; for delta-elimination activity in catalysis.

The protein belongs to the FPG family. Monomer. It depends on Zn(2+) as a cofactor.

It carries out the reaction Hydrolysis of DNA containing ring-opened 7-methylguanine residues, releasing 2,6-diamino-4-hydroxy-5-(N-methyl)formamidopyrimidine.. It catalyses the reaction 2'-deoxyribonucleotide-(2'-deoxyribose 5'-phosphate)-2'-deoxyribonucleotide-DNA = a 3'-end 2'-deoxyribonucleotide-(2,3-dehydro-2,3-deoxyribose 5'-phosphate)-DNA + a 5'-end 5'-phospho-2'-deoxyribonucleoside-DNA + H(+). Functionally, involved in base excision repair of DNA damaged by oxidation or by mutagenic agents. Acts as a DNA glycosylase that recognizes and removes damaged bases. Has a preference for oxidized purines, such as 7,8-dihydro-8-oxoguanine (8-oxoG). Has AP (apurinic/apyrimidinic) lyase activity and introduces nicks in the DNA strand. Cleaves the DNA backbone by beta-delta elimination to generate a single-strand break at the site of the removed base with both 3'- and 5'-phosphates. This chain is Formamidopyrimidine-DNA glycosylase, found in Rhodopseudomonas palustris (strain HaA2).